Consider the following 1083-residue polypeptide: MPTNFTVVPVEARADGAGDEAAERTEEPGSPESADPACPTPGDGNPRENSPFINNVEVERESYFEGKNMALFEEEMDSNPMVSSLLNKLANYTNLSQGVVEHEEDEDSRRREIKAPRMGTFIGVYLPCLQNILGVILFLRLTWIVGAAGVLESFLIVAMCCTCTMLTAISMSAIATNGVVPAGGSYYMISRSLGPEFGGAVGLCFYLGTTFAGAMYILGTIEIFLTYISPSAAIFQAETADGEAAALLNNMRVYGSCALALMAVVVFVGVKYVNKLALVFLACVVLSILAIYAGVIKTAFAPPDIPVCLLGNRTLANRNFDTCAKMQVVSNGTVTTALWRLFCNGSSLGASCDEYFVQNNVTEIQGIPGVASGVFLDNLWSTYSDKGAFVEKKGVSSVPVSEESRPGGLPYVLTDIMTYFTMLVGIYFPSVTGIMAGSNRSGDLKDAQKSIPTGTILAIVTTSFIYLSCIVLFGACIEGVVLRDKFGEALQGNLVIGMLAWPSPWVIVIGSFFSTCGAGLQSLTGAPRLLQAIARDGIIPFLQVFGHGKANGEPTWALLLTALICETGILIASLDSVAPILSMFFLMCYMFVNLACAVQTLLRTPNWRPRFKFYHWTLSFLGMSLCLALMFICSWYYALFAMLIAGCIYKYIEYRGAEKEWGDGIRGLSLNAARYALLRVEHGPPHTKNWRPQVLVMLNLDSEQCVKHPRLLSFTSQLKAGKGLTIVGSVLEGTYLDKHVEAQRAEENIRSLMSAEKMKGFCQLVVSSNLRDGASHLIQSAGLGGMKHNTVLMAWPEAWKQADNPFSWKNFVDTVRDTTAAHQALLVAKNIDLFPQNQERFSDGNIDVWWIVHDGGMLMLLPFLLRQHKVWRKCRMRIFTVAQVDDNSIQMKKDLQMFLYHLRISAEVEVVEMVENDISAFTYEKTLMMEQRSQMLKQMQLSKNEREREAQLIHDRNTASHTVATARTEAPPTPDKVQMTWTKEKLIAEKHRNKDTGTSGFKDLFSLKPDQSNVRRMHTAVKLNGVVLNKSQDAQLVLLNMPGPPKSRQGDENYMEFLEVLTEGLNRVLLVRGGGREVITIYS.

A disordered region spans residues 1–51 (MPTNFTVVPVEARADGAGDEAAERTEEPGSPESADPACPTPGDGNPRENSP). At 1 to 119 (MPTNFTVVPV…RREIKAPRMG (119 aa)) the chain is on the cytoplasmic side. Over residues 12–27 (ARADGAGDEAAERTEE) the composition is skewed to basic and acidic residues. Phosphoserine occurs at positions 30, 33, 50, and 62. Residues 120–142 (TFIGVYLPCLQNILGVILFLRLT) traverse the membrane as a discontinuously helical segment. K(+)-binding residues include Asn131 and Ile132. Val135 contacts chloride. Topologically, residues 143–149 (WIVGAAG) are extracellular. The chain crosses the membrane as a helical span at residues 150–172 (VLESFLIVAMCCTCTMLTAISMS). The Cytoplasmic segment spans residues 173-196 (AIATNGVVPAGGSYYMISRSLGPE). The chain crosses the membrane as a helical span at residues 197 to 225 (FGGAVGLCFYLGTTFAGAMYILGTIEIFL). Residues 226-249 (TYISPSAAIFQAETADGEAAALLN) are Extracellular-facing. Helical transmembrane passes span 250-271 (NMRV…VGVK) and 272-300 (YVNK…KTAF). Topologically, residues 301–419 (APPDIPVCLL…PYVLTDIMTY (119 aa)) are extracellular. Residues Asn312, Asn331, and Asn360 are each glycosylated (N-linked (GlcNAc...) asparagine). The chain crosses the membrane as a helical span at residues 420–440 (FTMLVGIYFPSVTGIMAGSNR). Positions 429 and 432 each coordinate K(+). Pro429 serves as a coordination point for chloride. Chloride is bound by residues Gly433 and Ile434. Residues 441 to 450 (SGDLKDAQKS) are Cytoplasmic-facing. The helical transmembrane segment at 451–473 (IPTGTILAIVTTSFIYLSCIVLF) threads the bilayer. Residues 474 to 504 (GACIEGVVLRDKFGEALQGNLVIGMLAWPSP) are Extracellular-facing. A helical membrane pass occupies residues 505 to 531 (WVIVIGSFFSTCGAGLQSLTGAPRLLQ). At 532–554 (AIARDGIIPFLQVFGHGKANGEP) the chain is on the cytoplasmic side. The next 2 helical transmembrane spans lie at 555–573 (TWAL…LIAS) and 574–598 (LDSV…ACAV). Tyr589 serves as a coordination point for chloride. The Cytoplasmic portion of the chain corresponds to 599–612 (QTLLRTPNWRPRFK). 2 consecutive transmembrane segments (helical) span residues 613–635 (FYHW…ICSW) and 636–651 (YYAL…IYKY). At 652–1083 (IEYRGAEKEW…GGREVITIYS (432 aa)) the chain is on the cytoplasmic side. The segment at 664-680 (GIRGLSLNAARYALLRV) is scissor helix. Thr973 and Thr980 each carry phosphothreonine.

It belongs to the SLC12A transporter family. K/Cl co-transporter subfamily. Homodimer; adopts a domain-swap conformation at the scissor helices connecting the transmembrane domain and C-terminal domain. Heterodimer with K-Cl cotransporter SLC12A5. In terms of tissue distribution, widely expressed with highest levels in kidney, liver and pancreas. Expressed in choroid plexus and suprachiasmatic nucleus.

The protein resides in the cell membrane. The catalysed reaction is K(+)(in) + chloride(in) = K(+)(out) + chloride(out). With respect to regulation, activated by N-ethylmaleimide (NEM). Inhibited by furosemide, DIDS and bumetanide. The inhibition is much stronger in the presence of 50 mM K(+) in the uptake medium. Inhibited by DIOA. Inhibited by WNK3. Functionally, mediates electroneutral potassium-chloride cotransport when activated by cell swelling. May mediate K(+) uptake into Deiters' cells in the cochlea and contribute to K(+) recycling in the inner ear. Important for the survival of cochlear outer and inner hair cells and the maintenance of the organ of Corti. May be required for basolateral Cl(-) extrusion in the kidney and contribute to renal acidification. The chain is Solute carrier family 12 member 7 from Rattus norvegicus (Rat).